Here is a 270-residue protein sequence, read N- to C-terminus: Shikimate dehydrogenase (NADP(+)) (270 aa).

Shikimate contacts are provided by residues 15 to 17 (SKS) and Thr62. Residue Lys66 is the Proton acceptor of the active site. Asn87 and Asp102 together coordinate shikimate. Residues 127-131 (GAGGA), 151-156 (NRTVAR), and Met214 each bind NADP(+). Residue Tyr216 coordinates shikimate. NADP(+) is bound at residue Gly238.

The protein belongs to the shikimate dehydrogenase family. In terms of assembly, homodimer.

It catalyses the reaction shikimate + NADP(+) = 3-dehydroshikimate + NADPH + H(+). Its pathway is metabolic intermediate biosynthesis; chorismate biosynthesis; chorismate from D-erythrose 4-phosphate and phosphoenolpyruvate: step 4/7. In terms of biological role, involved in the biosynthesis of the chorismate, which leads to the biosynthesis of aromatic amino acids. Catalyzes the reversible NADPH linked reduction of 3-dehydroshikimate (DHSA) to yield shikimate (SA). This chain is Shikimate dehydrogenase (NADP(+)), found in Alkalilimnicola ehrlichii (strain ATCC BAA-1101 / DSM 17681 / MLHE-1).